The chain runs to 149 residues: UPF0178 protein Cphy_3042 (149 aa).

Residues 112 to 128 show a composition bias toward basic residues; that stretch reads QRRHGKQNLHSKNNKKR. A disordered region spans residues 112-132; sequence QRRHGKQNLHSKNNKKRTTGD.

The protein belongs to the UPF0178 family.

The polypeptide is UPF0178 protein Cphy_3042 (Lachnoclostridium phytofermentans (strain ATCC 700394 / DSM 18823 / ISDg) (Clostridium phytofermentans)).